Reading from the N-terminus, the 397-residue chain is Lipid-A-disaccharide synthase (397 aa).

Belongs to the LpxB family.

It carries out the reaction a lipid X + a UDP-2-N,3-O-bis[(3R)-3-hydroxyacyl]-alpha-D-glucosamine = a lipid A disaccharide + UDP + H(+). It functions in the pathway bacterial outer membrane biogenesis; LPS lipid A biosynthesis. Condensation of UDP-2,3-diacylglucosamine and 2,3-diacylglucosamine-1-phosphate to form lipid A disaccharide, a precursor of lipid A, a phosphorylated glycolipid that anchors the lipopolysaccharide to the outer membrane of the cell. This Mannheimia succiniciproducens (strain KCTC 0769BP / MBEL55E) protein is Lipid-A-disaccharide synthase.